A 103-amino-acid chain; its full sequence is Large ribosomal subunit protein bL21 (103 aa).

Belongs to the bacterial ribosomal protein bL21 family. As to quaternary structure, part of the 50S ribosomal subunit. Contacts protein L20.

Functionally, this protein binds to 23S rRNA in the presence of protein L20. The protein is Large ribosomal subunit protein bL21 of Kocuria rhizophila (strain ATCC 9341 / DSM 348 / NBRC 103217 / DC2201).